The sequence spans 428 residues: Dihydroorotase (428 aa).

Residues His-59 and His-61 each coordinate Zn(2+). Substrate is bound by residues 61-63 (HFR) and Asn-93. Zn(2+) contacts are provided by Asp-151, His-178, and His-231. A substrate-binding site is contributed by Asn-277. Residue Asp-304 participates in Zn(2+) binding. Residue Asp-304 is part of the active site. Residues His-308 and 322-323 (FG) each bind substrate.

Belongs to the metallo-dependent hydrolases superfamily. DHOase family. Class I DHOase subfamily. Zn(2+) serves as cofactor.

It catalyses the reaction (S)-dihydroorotate + H2O = N-carbamoyl-L-aspartate + H(+). The protein operates within pyrimidine metabolism; UMP biosynthesis via de novo pathway; (S)-dihydroorotate from bicarbonate: step 3/3. In terms of biological role, catalyzes the reversible cyclization of carbamoyl aspartate to dihydroorotate. The sequence is that of Dihydroorotase from Bacillus licheniformis (strain ATCC 14580 / DSM 13 / JCM 2505 / CCUG 7422 / NBRC 12200 / NCIMB 9375 / NCTC 10341 / NRRL NRS-1264 / Gibson 46).